The sequence spans 226 residues: Protein TRI1 (226 aa).

One can recognise a DEK-C domain in the interval 1 to 56 (MADINKYIPMVDAILSVSNPDEISPKRVRKALQILYSVNLDSQRKLINELILERFG). Positions 83–118 (QKEEERPLRSTRKRKGKSESKSKRKKKKNDSPDSNS) are disordered. Residues 91-110 (RSTRKRKGKSESKSKRKKKK) are compositionally biased toward basic residues. Residue S113 is modified to Phosphoserine. Residues 119-195 (ISVRKVLLSA…NKLLTKHLFN (77 aa)) enclose the SWIB/MDM2 domain. Positions 200-218 (VKHEEEQKQTPEKEIKLEN) are enriched in basic and acidic residues. Positions 200-226 (VKHEEEQKQTPEKEIKLENESLPNLSG) are disordered. Residues K201 and K215 each participate in a glycyl lysine isopeptide (Lys-Gly) (interchain with G-Cter in SUMO) cross-link. A Phosphoserine modification is found at S225.

The protein resides in the cytoplasm. Its subcellular location is the nucleus. It localises to the nucleolus. In terms of biological role, may be involved in transcription regulation. The sequence is that of Protein TRI1 (TRI1) from Saccharomyces cerevisiae (strain ATCC 204508 / S288c) (Baker's yeast).